We begin with the raw amino-acid sequence, 1396 residues long: DNA-directed RNA polymerase subunit beta' (1396 aa).

Cysteine 72, cysteine 74, cysteine 87, and cysteine 90 together coordinate Zn(2+). Aspartate 463, aspartate 465, and aspartate 467 together coordinate Mg(2+). Cysteine 814, cysteine 889, cysteine 896, and cysteine 899 together coordinate Zn(2+).

This sequence belongs to the RNA polymerase beta' chain family. The RNAP catalytic core consists of 2 alpha, 1 beta, 1 beta' and 1 omega subunit. When a sigma factor is associated with the core the holoenzyme is formed, which can initiate transcription. Mg(2+) serves as cofactor. Zn(2+) is required as a cofactor.

It carries out the reaction RNA(n) + a ribonucleoside 5'-triphosphate = RNA(n+1) + diphosphate. In terms of biological role, DNA-dependent RNA polymerase catalyzes the transcription of DNA into RNA using the four ribonucleoside triphosphates as substrates. In Chlamydia trachomatis serovar L2b (strain UCH-1/proctitis), this protein is DNA-directed RNA polymerase subunit beta'.